Here is a 91-residue protein sequence, read N- to C-terminus: Small ribosomal subunit protein uS19 (91 aa).

This sequence belongs to the universal ribosomal protein uS19 family.

Its function is as follows. Protein S19 forms a complex with S13 that binds strongly to the 16S ribosomal RNA. The polypeptide is Small ribosomal subunit protein uS19 (Pseudomonas paraeruginosa (strain DSM 24068 / PA7) (Pseudomonas aeruginosa (strain PA7))).